A 68-amino-acid chain; its full sequence is Conotoxin Cal12.1p3 (68 aa).

The propeptide occupies 1–21 (DLITNSYTRGKPRHVTSWPKL).

Post-translationally, contains 4 disulfide bonds. In terms of tissue distribution, expressed by the venom duct.

It is found in the secreted. This Californiconus californicus (California cone) protein is Conotoxin Cal12.1p3.